The primary structure comprises 146 residues: VHWSAEEKQLITGLWGKVNVAECGAEALARLLIVYPWTQRFFASFGNLSSPAAVLANPMVRAHGKKVLTSFGDAVKNMDNIKNTFAQLSELHCDKLHVDPENFRLLGDILIIVLAAHFSKDFTPDCQAAAQKLVRVVAHALARKYH.

The 145-residue stretch at 2–146 (HWSAEEKQLI…VAHALARKYH (145 aa)) folds into the Globin domain. Residues H63 and H92 each coordinate heme b.

This sequence belongs to the globin family. As to quaternary structure, heterotetramer of two alpha chains and two beta chains. In terms of tissue distribution, red blood cells.

Its function is as follows. Involved in oxygen transport from the lung to the various peripheral tissues. This chain is Hemoglobin subunit beta (HBB), found in Aptenodytes forsteri (Emperor penguin).